A 229-amino-acid chain; its full sequence is 7-cyano-7-deazaguanine synthase (229 aa).

Residue 9-19 (LSGGLDSTTVL) participates in ATP binding. Zn(2+) contacts are provided by C192, C202, C205, and C208.

This sequence belongs to the QueC family. Zn(2+) serves as cofactor.

It carries out the reaction 7-carboxy-7-deazaguanine + NH4(+) + ATP = 7-cyano-7-deazaguanine + ADP + phosphate + H2O + H(+). Its pathway is purine metabolism; 7-cyano-7-deazaguanine biosynthesis. Functionally, catalyzes the ATP-dependent conversion of 7-carboxy-7-deazaguanine (CDG) to 7-cyano-7-deazaguanine (preQ(0)). The sequence is that of 7-cyano-7-deazaguanine synthase from Kineococcus radiotolerans (strain ATCC BAA-149 / DSM 14245 / SRS30216).